The following is a 634-amino-acid chain: 1-deoxy-D-xylulose-5-phosphate synthase (634 aa).

Thiamine diphosphate contacts are provided by residues histidine 74 and 115-117; that span reads AHS. Mg(2+) is bound at residue aspartate 146. Thiamine diphosphate-binding positions include 147-148, asparagine 176, tyrosine 283, and glutamate 365; that span reads GA. Position 176 (asparagine 176) interacts with Mg(2+).

It belongs to the transketolase family. DXPS subfamily. In terms of assembly, homodimer. Requires Mg(2+) as cofactor. It depends on thiamine diphosphate as a cofactor.

It catalyses the reaction D-glyceraldehyde 3-phosphate + pyruvate + H(+) = 1-deoxy-D-xylulose 5-phosphate + CO2. It participates in metabolic intermediate biosynthesis; 1-deoxy-D-xylulose 5-phosphate biosynthesis; 1-deoxy-D-xylulose 5-phosphate from D-glyceraldehyde 3-phosphate and pyruvate: step 1/1. Catalyzes the acyloin condensation reaction between C atoms 2 and 3 of pyruvate and glyceraldehyde 3-phosphate to yield 1-deoxy-D-xylulose-5-phosphate (DXP). In Burkholderia thailandensis (strain ATCC 700388 / DSM 13276 / CCUG 48851 / CIP 106301 / E264), this protein is 1-deoxy-D-xylulose-5-phosphate synthase.